The chain runs to 482 residues: Cardiolipin synthase (482 aa).

A run of 2 helical transmembrane segments spans residues leucine 4–phenylalanine 24 and tryptophan 34–phenylalanine 54. 2 PLD phosphodiesterase domains span residues leucine 217 to tyrosine 244 and aspartate 395 to serine 422. Active-site residues include histidine 222, lysine 224, aspartate 229, histidine 400, lysine 402, and aspartate 407.

It belongs to the phospholipase D family. Cardiolipin synthase subfamily.

It is found in the cell membrane. The enzyme catalyses 2 a 1,2-diacyl-sn-glycero-3-phospho-(1'-sn-glycerol) = a cardiolipin + glycerol. In terms of biological role, catalyzes the reversible phosphatidyl group transfer from one phosphatidylglycerol molecule to another to form cardiolipin (CL) (diphosphatidylglycerol) and glycerol. In Listeria monocytogenes serotype 4a (strain HCC23), this protein is Cardiolipin synthase (cls).